Here is a 155-residue protein sequence, read N- to C-terminus: Small ribosomal subunit protein uS7c (155 aa).

This sequence belongs to the universal ribosomal protein uS7 family. Part of the 30S ribosomal subunit.

It is found in the plastid. The protein resides in the chloroplast. In terms of biological role, one of the primary rRNA binding proteins, it binds directly to 16S rRNA where it nucleates assembly of the head domain of the 30S subunit. This is Small ribosomal subunit protein uS7c (rps7) from Metasequoia glyptostroboides (Dawn redwood).